A 385-amino-acid chain; its full sequence is Cytochrome b (385 aa).

Helical transmembrane passes span 32–52 (LGSL…FMAM), 76–98 (WLLR…MHIA), 113–133 (VWIV…LGYC), and 179–199 (FFAL…MHFM). H82 and H96 together coordinate heme b. Heme b-binding residues include H183 and H197. H202 is an a ubiquinone binding site. A run of 4 helical transmembrane segments spans residues 225–245 (FIFK…LFVF), 289–309 (LLGV…PITD), 321–341 (LSKF…QIGQ), and 348–368 (FVLM…IIVP).

The protein belongs to the cytochrome b family. Fungal cytochrome b-c1 complex contains 10 subunits; 3 respiratory subunits, 2 core proteins and 5 low-molecular weight proteins. Cytochrome b-c1 complex is a homodimer. Heme b is required as a cofactor.

It is found in the mitochondrion inner membrane. Functionally, component of the ubiquinol-cytochrome c reductase complex (complex III or cytochrome b-c1 complex) that is part of the mitochondrial respiratory chain. The b-c1 complex mediates electron transfer from ubiquinol to cytochrome c. Contributes to the generation of a proton gradient across the mitochondrial membrane that is then used for ATP synthesis. This chain is Cytochrome b (COB), found in Candida glabrata (strain ATCC 2001 / BCRC 20586 / JCM 3761 / NBRC 0622 / NRRL Y-65 / CBS 138) (Yeast).